Consider the following 460-residue polypeptide: Cysteine--tRNA ligase (460 aa).

Cys28 serves as a coordination point for Zn(2+). A 'HIGH' region motif is present at residues 30 to 40; it reads MTVYDYCHLGH. Residues Cys209, His234, and Glu238 each contribute to the Zn(2+) site. The short motif at 266–270 is the 'KMSKS' region element; sequence KMSKS. Lys269 contacts ATP.

It belongs to the class-I aminoacyl-tRNA synthetase family. As to quaternary structure, monomer. The cofactor is Zn(2+).

The protein localises to the cytoplasm. The catalysed reaction is tRNA(Cys) + L-cysteine + ATP = L-cysteinyl-tRNA(Cys) + AMP + diphosphate. This is Cysteine--tRNA ligase from Pseudomonas putida (strain ATCC 700007 / DSM 6899 / JCM 31910 / BCRC 17059 / LMG 24140 / F1).